A 242-amino-acid chain; its full sequence is Platelet-derived growth factor subunit B (242 aa).

The first 20 residues, 1 to 20 (MNRCWALFLSLCCYLRLVSA), serve as a signal peptide directing secretion. A propeptide spans 21-81 (EGDPIPEELY…ELESLSRGRR (61 aa)) (removed in mature form). A glycan (N-linked (GlcNAc...) asparagine) is linked at Asn-63. 3 cysteine pairs are disulfide-bonded: Cys-97–Cys-141, Cys-130–Cys-178, and Cys-134–Cys-180. Basic residues predominate over residues 219–232 (PPKGKHRKFKHTHD). A disordered region spans residues 219–242 (PPKGKHRKFKHTHDKKALKETLGA). Residues 233 to 242 (KKALKETLGA) are compositionally biased toward basic and acidic residues.

This sequence belongs to the PDGF/VEGF growth factor family. As to quaternary structure, antiparallel homodimer; disulfide-linked. Antiparallel heterodimer with PDGFA; disulfide-linked. The PDGFB homodimer interacts with PDGFRA and PDGFRB homodimers, and with heterodimers formed by PDGFRA and PDGFRB. The heterodimer composed of PDGFA and PDGFB interacts with PDGFRB homodimers, and with heterodimers formed by PDGFRA and PDGFRB. Interacts with XLKD1. Interacts with LRP1. Interacts with SORL1 (via the N-terminal ectodomain). Interacts with CD82; this interaction inhibits PDGFB-mediated signaling pathway.

The protein resides in the secreted. Its function is as follows. Growth factor that plays an essential role in the regulation of embryonic development, cell proliferation, cell migration, survival and chemotaxis. Potent mitogen for cells of mesenchymal origin. Required for normal proliferation and recruitment of pericytes and vascular smooth muscle cells in the central nervous system, skin, lung, heart and placenta. Required for normal blood vessel development, and for normal development of kidney glomeruli. Plays an important role in wound healing. Signaling is modulated by the formation of heterodimers with PDGFA. This chain is Platelet-derived growth factor subunit B (PDGFB), found in Canis lupus familiaris (Dog).